The primary structure comprises 633 residues: Threonine--tRNA ligase (633 aa).

The segment at 1–143 (MRALFLHSNR…SRTIKPKKVK (143 aa)) is editing domain. 2 catalytic regions span residues 220–515 (NPLN…PVLP) and 221–515 (PLND…PVLP). Residues Cys-314, His-365, and His-488 each contribute to the Zn(2+) site.

It belongs to the class-II aminoacyl-tRNA synthetase family. In terms of assembly, homodimer. The cofactor is Zn(2+).

Its subcellular location is the cytoplasm. It catalyses the reaction tRNA(Thr) + L-threonine + ATP = L-threonyl-tRNA(Thr) + AMP + diphosphate + H(+). Its function is as follows. Catalyzes the attachment of threonine to tRNA(Thr) in a two-step reaction: L-threonine is first activated by ATP to form Thr-AMP and then transferred to the acceptor end of tRNA(Thr). Also edits incorrectly charged L-seryl-tRNA(Thr). The protein is Threonine--tRNA ligase of Nanoarchaeum equitans (strain Kin4-M).